The primary structure comprises 284 residues: Phosphonates import ATP-binding protein PhnC 1 (284 aa).

The ABC transporter domain maps to 5–253 (IEVRGLSKSF…MLRDLYGSEA (249 aa)). Residue 38–45 (GASGSGKS) participates in ATP binding.

This sequence belongs to the ABC transporter superfamily. Phosphonates importer (TC 3.A.1.9.1) family. As to quaternary structure, the complex is composed of two ATP-binding proteins (PhnC), two transmembrane proteins (PhnE) and a solute-binding protein (PhnD).

It localises to the cell inner membrane. The enzyme catalyses phosphonate(out) + ATP + H2O = phosphonate(in) + ADP + phosphate + H(+). Part of the ABC transporter complex PhnCDE involved in phosphonates import. Responsible for energy coupling to the transport system. The polypeptide is Phosphonates import ATP-binding protein PhnC 1 (Cupriavidus metallidurans (strain ATCC 43123 / DSM 2839 / NBRC 102507 / CH34) (Ralstonia metallidurans)).